Here is a 71-residue protein sequence, read N- to C-terminus: MSTKKIFEERLQELEAIVTRLENGDVPLEEAISEFQKGMVLSKDLQKTLQAAEKTLVKVMQADGTELEMDA.

It belongs to the XseB family. Heterooligomer composed of large and small subunits.

The protein localises to the cytoplasm. The enzyme catalyses Exonucleolytic cleavage in either 5'- to 3'- or 3'- to 5'-direction to yield nucleoside 5'-phosphates.. Functionally, bidirectionally degrades single-stranded DNA into large acid-insoluble oligonucleotides, which are then degraded further into small acid-soluble oligonucleotides. This chain is Exodeoxyribonuclease 7 small subunit, found in Streptococcus equi subsp. equi (strain 4047).